Reading from the N-terminus, the 102-residue chain is FMRFamide-like neuropeptides 9 (102 aa).

Residues 1–19 form the signal peptide; that stretch reads MNQFYALFLVACIAAMANA. Positions 20–63 are excised as a propeptide; the sequence is YEEPDLDALAEFCGKESNRKYCDQIAQLATQHAIGINQEQVRME. A Phenylalanine amide modification is found at F72. Residues 75–90 constitute a propeptide that is removed on maturation; sequence RSGYPLVIDDEEMRMD. Position 99 is a phenylalanine amide (F99).

Belongs to the FARP (FMRFamide related peptide) family. Each flp gene is expressed in a distinct set of neurons.

Its subcellular location is the secreted. Functionally, FMRFamides and FMRFamide-like peptides are neuropeptides. In terms of biological role, KPSFVRF-amide: Has no effect on somatic body wall muscle, inhibits contraction of vaginal vera muscle, and inhibits the activity of the dissected pharyngeal myogenic muscle system. Acts as a ligand for the npr-22 receptor in vitro. In Caenorhabditis elegans, this protein is FMRFamide-like neuropeptides 9.